A 540-amino-acid polypeptide reads, in one-letter code: Phosphoenolpyruvate carboxykinase (ATP) (540 aa).

Arg-65 provides a ligand contact to substrate. Lys-87 carries the N6-acetyllysine modification. Residues Tyr-207 and Lys-213 each contribute to the substrate site. ATP is bound by residues Lys-213, His-232, and 248-256 (GLSGTGKTT). Positions 213 and 232 each coordinate Mn(2+). Asp-269 contacts Mn(2+). ATP is bound by residues Glu-297, Arg-333, 449-450 (RI), and Thr-455. Residue Arg-333 coordinates substrate. Position 523 is an N6-acetyllysine (Lys-523).

The protein belongs to the phosphoenolpyruvate carboxykinase (ATP) family. As to quaternary structure, monomer. It depends on Mn(2+) as a cofactor.

It is found in the cytoplasm. The catalysed reaction is oxaloacetate + ATP = phosphoenolpyruvate + ADP + CO2. The protein operates within carbohydrate biosynthesis; gluconeogenesis. Its function is as follows. Involved in the gluconeogenesis. Catalyzes the conversion of oxaloacetate (OAA) to phosphoenolpyruvate (PEP) through direct phosphoryl transfer between the nucleoside triphosphate and OAA. This chain is Phosphoenolpyruvate carboxykinase (ATP), found in Escherichia coli O45:K1 (strain S88 / ExPEC).